The chain runs to 1463 residues: Kinesin-like protein KIF15 (1463 aa).

Residues 18–354 enclose the Kinesin motor domain; that stretch reads AIKVFVRVRP…LKFARRAKMI (337 aa). Position 99–106 (99–106) interacts with ATP; sequence GQTGSGKT. Positions 387 to 424 are disordered; sequence AEGSIPRGPSESGDSQMSNSSTESNGPVSGQQSGSSSS. Positions 398–414 are enriched in polar residues; the sequence is SGDSQMSNSSTESNGPV. A compositionally biased stretch (low complexity) spans 415 to 424; it reads SGQQSGSSSS. 2 coiled-coil regions span residues 436 to 517 and 586 to 646; these read SLRD…LEHN and TSTL…QGMK. Disordered regions lie at residues 686-720, 1335-1356, and 1409-1444; these read AGEE…SGDI, FKEK…SKLT, and QLGK…EAGA. Residues 701 to 715 show a composition bias toward polar residues; it reads DNGSPLRSHSTNSLP. Residues 1418–1428 show a composition bias toward basic and acidic residues; the sequence is EQMKRDYEALQ.

Belongs to the TRAFAC class myosin-kinesin ATPase superfamily. Kinesin family. KLP2 subfamily. In terms of assembly, homodimer.

The protein resides in the cytoplasm. It localises to the cytoskeleton. Its subcellular location is the spindle. Functionally, plus-end directed kinesin-like motor enzyme involved in mitotic spindle assembly. Plays a role in positioning spindle poles during mitosis, specifically at prometaphase. This Strongylocentrotus purpuratus (Purple sea urchin) protein is Kinesin-like protein KIF15 (KIF15).